The sequence spans 470 residues: Histidine--tRNA ligase (470 aa).

This sequence belongs to the class-II aminoacyl-tRNA synthetase family. As to quaternary structure, homodimer.

Its subcellular location is the cytoplasm. It catalyses the reaction tRNA(His) + L-histidine + ATP = L-histidyl-tRNA(His) + AMP + diphosphate + H(+). The chain is Histidine--tRNA ligase from Xanthomonas oryzae pv. oryzae (strain PXO99A).